The chain runs to 83 residues: RNA-binding protein Hfq (83 aa).

The region spanning 10–70 (DTFLNQVRKE…ISTVMPLRPI (61 aa)) is the Sm domain.

It belongs to the Hfq family. As to quaternary structure, homohexamer.

Functionally, RNA chaperone that binds small regulatory RNA (sRNAs) and mRNAs to facilitate mRNA translational regulation in response to envelope stress, environmental stress and changes in metabolite concentrations. Also binds with high specificity to tRNAs. The polypeptide is RNA-binding protein Hfq (Desulfitobacterium hafniense (strain Y51)).